We begin with the raw amino-acid sequence, 311 residues long: tRNA-cytidine(32) 2-sulfurtransferase (311 aa).

Residues 47-52 (SGGKDS) carry the PP-loop motif motif. The [4Fe-4S] cluster site is built by Cys-122, Cys-125, and Cys-213.

It belongs to the TtcA family. Homodimer. Mg(2+) is required as a cofactor. The cofactor is [4Fe-4S] cluster.

The protein resides in the cytoplasm. The catalysed reaction is cytidine(32) in tRNA + S-sulfanyl-L-cysteinyl-[cysteine desulfurase] + AH2 + ATP = 2-thiocytidine(32) in tRNA + L-cysteinyl-[cysteine desulfurase] + A + AMP + diphosphate + H(+). Its pathway is tRNA modification. Catalyzes the ATP-dependent 2-thiolation of cytidine in position 32 of tRNA, to form 2-thiocytidine (s(2)C32). The sulfur atoms are provided by the cysteine/cysteine desulfurase (IscS) system. This Salmonella typhimurium (strain LT2 / SGSC1412 / ATCC 700720) protein is tRNA-cytidine(32) 2-sulfurtransferase.